Reading from the N-terminus, the 120-residue chain is UPF0231 protein YacL (120 aa).

It belongs to the UPF0231 family.

The protein is UPF0231 protein YacL of Salmonella typhi.